The sequence spans 451 residues: Bifunctional protein GlmU (451 aa).

Residues 1–232 are pyrophosphorylase; sequence MTARSSLTIV…EDEVRGINTK (232 aa). Residues 11 to 14, K25, Q78, and 83 to 84 each bind UDP-N-acetyl-alpha-D-glucosamine; these read LAAG and GT. D108 contributes to the Mg(2+) binding site. G144, E158, N173, and N230 together coordinate UDP-N-acetyl-alpha-D-glucosamine. N230 contacts Mg(2+). A linker region spans residues 233–253; it reads AQLAEAESVMQARLRKAAMEA. Positions 254-451 are N-acetyltransferase; that stretch reads GVTLIAPETV…MKTRGKKPEK (198 aa). R319 and K337 together coordinate UDP-N-acetyl-alpha-D-glucosamine. The active-site Proton acceptor is H349. Residues Y352 and N363 each contribute to the UDP-N-acetyl-alpha-D-glucosamine site. Acetyl-CoA-binding positions include A366, 372 to 373, S409, and R426; that span reads NY.

In the N-terminal section; belongs to the N-acetylglucosamine-1-phosphate uridyltransferase family. The protein in the C-terminal section; belongs to the transferase hexapeptide repeat family. As to quaternary structure, homotrimer. Requires Mg(2+) as cofactor.

It localises to the cytoplasm. It carries out the reaction alpha-D-glucosamine 1-phosphate + acetyl-CoA = N-acetyl-alpha-D-glucosamine 1-phosphate + CoA + H(+). The enzyme catalyses N-acetyl-alpha-D-glucosamine 1-phosphate + UTP + H(+) = UDP-N-acetyl-alpha-D-glucosamine + diphosphate. It participates in nucleotide-sugar biosynthesis; UDP-N-acetyl-alpha-D-glucosamine biosynthesis; N-acetyl-alpha-D-glucosamine 1-phosphate from alpha-D-glucosamine 6-phosphate (route II): step 2/2. Its pathway is nucleotide-sugar biosynthesis; UDP-N-acetyl-alpha-D-glucosamine biosynthesis; UDP-N-acetyl-alpha-D-glucosamine from N-acetyl-alpha-D-glucosamine 1-phosphate: step 1/1. The protein operates within bacterial outer membrane biogenesis; LPS lipid A biosynthesis. Its function is as follows. Catalyzes the last two sequential reactions in the de novo biosynthetic pathway for UDP-N-acetylglucosamine (UDP-GlcNAc). The C-terminal domain catalyzes the transfer of acetyl group from acetyl coenzyme A to glucosamine-1-phosphate (GlcN-1-P) to produce N-acetylglucosamine-1-phosphate (GlcNAc-1-P), which is converted into UDP-GlcNAc by the transfer of uridine 5-monophosphate (from uridine 5-triphosphate), a reaction catalyzed by the N-terminal domain. This Bradyrhizobium diazoefficiens (strain JCM 10833 / BCRC 13528 / IAM 13628 / NBRC 14792 / USDA 110) protein is Bifunctional protein GlmU.